Consider the following 247-residue polypeptide: EGF-like domain-containing protein C02B10.3 (247 aa).

An N-terminal signal peptide occupies residues 1-17; it reads MTGALCIVLFGVTMVTA. Residues 18–220 are Extracellular-facing; it reads ERPKIKDTHG…LCDKRCQKGH (203 aa). 2 consecutive EGF-like domains span residues 114–150 and 180–213; these read FGTSCTPHMCQHNGTIAVGKKEIECICPPPWDGRFCE and SGASCDVIKSCLNNGQLIDGKCKCPDGYYGDLCD. Intrachain disulfides connect Cys123/Cys138, Cys140/Cys149, Cys190/Cys201, and Cys203/Cys212. Asn126 carries N-linked (GlcNAc...) asparagine glycosylation. The helical transmembrane segment at 221–240 threads the bilayer; sequence VTCSTCSSFIPAALFAIILL. Over 241 to 247 the chain is Cytoplasmic; sequence CVNKFNY.

It is found in the membrane. The chain is EGF-like domain-containing protein C02B10.3 from Caenorhabditis elegans.